A 285-amino-acid chain; its full sequence is Nucleotide-binding protein PFL_0912 (285 aa).

8–15 (GRSGSGKS) contacts ATP. 60 to 63 (DARN) provides a ligand contact to GTP.

The protein belongs to the RapZ-like family.

Displays ATPase and GTPase activities. The polypeptide is Nucleotide-binding protein PFL_0912 (Pseudomonas fluorescens (strain ATCC BAA-477 / NRRL B-23932 / Pf-5)).